An 861-amino-acid polypeptide reads, in one-letter code: Alpha-actinin A (861 aa).

The interval 1-239 is actin-binding; it reads MSEEPTPVSG…VMTYVAQYYH (239 aa). Calponin-homology (CH) domains are found at residues 22–127 and 136–242; these read ITQK…LRFA and LSAK…HHFS. 4 Spectrin repeats span residues 240 to 365, 366 to 480, 481 to 601, and 602 to 714; these read HFSA…ALEK, AEQE…TGVK, SSAE…EERK, and VQLA…EQVV. EF-hand domains lie at 729-764 and 765-800; these read EELS…IGDE and LTEE…SRKG. Ca(2+) contacts are provided by Asp-742, Asp-744, Asp-746, Lys-748, Glu-753, Asp-778, Asp-780, Asn-782, Thr-784, and Glu-789.

It belongs to the alpha-actinin family. In terms of assembly, homodimer; antiparallel.

It is found in the cytoplasm. The protein resides in the cell cortex. The protein localises to the contractile vacuole. It localises to the cytoplasmic vesicle. Its subcellular location is the phagosome. In terms of biological role, F-actin cross-linking protein which is thought to anchor actin to a variety of intracellular structures. This is a bundling protein. Increases the actin-stimulated ATPase activity of myosin. Involved in vegetative cell growth, phagocytosis, motility and development, probably through stabilization of the actin network in the cortical cytoskeleton. This Dictyostelium discoideum (Social amoeba) protein is Alpha-actinin A (abpA).